The chain runs to 122 residues: uncharacterized protein (122 aa).

The signal sequence occupies residues 1–33 (MASTVAGLSMSAESLRLPLLIGVSSGMLSVSDA).

This is an uncharacterized protein from Saccharomyces cerevisiae (strain ATCC 204508 / S288c) (Baker's yeast).